We begin with the raw amino-acid sequence, 542 residues long: CTP synthase (542 aa).

Residues 1-265 (MTRYIFITGG…DDEVLSVFGI (265 aa)) are amidoligase domain. Position 13 (Ser13) interacts with CTP. Ser13 contributes to the UTP binding site. Residues 14–19 (SLGKGL) and Asp71 contribute to the ATP site. Residues Asp71 and Glu139 each coordinate Mg(2+). CTP-binding positions include 146-148 (DIE), 186-191 (KTKPTQ), and Lys222. UTP is bound by residues 186 to 191 (KTKPTQ) and Lys222. The Glutamine amidotransferase type-1 domain maps to 291-541 (TIAIVGKYTG…VEAAVEQSRL (251 aa)). An L-glutamine-binding site is contributed by Gly353. Cys380 (nucleophile; for glutamine hydrolysis) is an active-site residue. Residues 381-384 (FGMQ), Glu404, and Arg469 each bind L-glutamine. Active-site residues include His514 and Glu516.

The protein belongs to the CTP synthase family. Homotetramer.

The enzyme catalyses UTP + L-glutamine + ATP + H2O = CTP + L-glutamate + ADP + phosphate + 2 H(+). It catalyses the reaction L-glutamine + H2O = L-glutamate + NH4(+). The catalysed reaction is UTP + NH4(+) + ATP = CTP + ADP + phosphate + 2 H(+). Its pathway is pyrimidine metabolism; CTP biosynthesis via de novo pathway; CTP from UDP: step 2/2. With respect to regulation, allosterically activated by GTP, when glutamine is the substrate; GTP has no effect on the reaction when ammonia is the substrate. The allosteric effector GTP functions by stabilizing the protein conformation that binds the tetrahedral intermediate(s) formed during glutamine hydrolysis. Inhibited by the product CTP, via allosteric rather than competitive inhibition. In terms of biological role, catalyzes the ATP-dependent amination of UTP to CTP with either L-glutamine or ammonia as the source of nitrogen. Regulates intracellular CTP levels through interactions with the four ribonucleotide triphosphates. The protein is CTP synthase of Parvibaculum lavamentivorans (strain DS-1 / DSM 13023 / NCIMB 13966).